Consider the following 94-residue polypeptide: Lipolysis-activating peptide 1-beta chain (94 aa).

A signal peptide spans 1 to 19 (MKILAVVLISVIVLNTANG). Positions 20-87 (ENYYPQKYTN…FFNALESQCP (68 aa)) constitute an LCN-type CS-alpha/beta domain. Disulfide bonds link cysteine 34/cysteine 56, cysteine 42/cysteine 66, and cysteine 46/cysteine 68.

This sequence belongs to the long (3 C-C) scorpion toxin superfamily. In terms of assembly, homodimer; disulfide-linked or monomer (edited version) or heterodimer of an alpha chain (AC D9U299 or AC D9U2A4) and this beta chain (non-edited version). As to expression, expressed by the venom gland.

The protein resides in the secreted. Functionally, the homodimer inhibits HMG-CoA reductase (HMGCR) (32% of inhibition produced by 0.6 uM), a glycoprotein involved in the control of cholesterol biosynthesis. The inhibitory effects of bumarsin are seen at much lower concentrations (0.6 uM) than that for statins such as atorvastatin (5 mM) and simvastatin (10 uM). In addition to inhibition of HMG-CoA reductase, this protein lowers cholesterol levels by inducing steroid hormone synthesis via StAR, and by increasing reverse cholesterol transport mediated by the induction of ABCA1 and APOA1. Its function is as follows. The heterodimer non-edited LVP1 induces lipolysis in rat adipocytes. Induction of lipolysis by LVP1 appears to be mediated through the beta-2 adrenergic receptor pathway (ADRB2). In terms of biological role, the monomer edited version, similar to alpha-toxins, may modulate voltage-gated sodium channels (Nav) and may block voltage-gated potassium channels (Kv). The chain is Lipolysis-activating peptide 1-beta chain from Lychas mucronatus (Chinese swimming scorpion).